We begin with the raw amino-acid sequence, 267 residues long: Undecaprenyl-diphosphatase (267 aa).

7 consecutive transmembrane segments (helical) span residues 1 to 21, 40 to 60, 85 to 105, 112 to 132, 188 to 208, 219 to 239, and 245 to 265; these read MPLLQLILVALIQGVTEFLPV, GQAIDVAVHVGTLAAVVLFFW, LALGLIVATIPTVIFGTFLYF, LRSVAVIGWTMLVFGVVLYIA, IAMLMSIPTIIASGVLLGTEV, DMGIAALLAMASALAALALMM, and VSFTPYVIYRVALGMVLLFIA.

The protein belongs to the UppP family.

The protein localises to the cell inner membrane. The catalysed reaction is di-trans,octa-cis-undecaprenyl diphosphate + H2O = di-trans,octa-cis-undecaprenyl phosphate + phosphate + H(+). In terms of biological role, catalyzes the dephosphorylation of undecaprenyl diphosphate (UPP). Confers resistance to bacitracin. This Ruegeria sp. (strain TM1040) (Silicibacter sp.) protein is Undecaprenyl-diphosphatase.